Here is a 357-residue protein sequence, read N- to C-terminus: Aminomethyltransferase (357 aa).

The protein belongs to the GcvT family. In terms of assembly, the glycine cleavage system is composed of four proteins: P, T, L and H.

It catalyses the reaction N(6)-[(R)-S(8)-aminomethyldihydrolipoyl]-L-lysyl-[protein] + (6S)-5,6,7,8-tetrahydrofolate = N(6)-[(R)-dihydrolipoyl]-L-lysyl-[protein] + (6R)-5,10-methylene-5,6,7,8-tetrahydrofolate + NH4(+). In terms of biological role, the glycine cleavage system catalyzes the degradation of glycine. The sequence is that of Aminomethyltransferase from Halothermothrix orenii (strain H 168 / OCM 544 / DSM 9562).